The primary structure comprises 383 residues: Spermidine/putrescine import ATP-binding protein PotA (383 aa).

In terms of domain architecture, ABC transporter spans 12-246 (IALRDISKVY…PSTPFVAGFI (235 aa)). An ATP-binding site is contributed by 48–55 (GPSGCGKT).

It belongs to the ABC transporter superfamily. Spermidine/putrescine importer (TC 3.A.1.11.1) family. The complex is composed of two ATP-binding proteins (PotA), two transmembrane proteins (PotB and PotC) and a solute-binding protein (PotD).

Its subcellular location is the cell membrane. It carries out the reaction ATP + H2O + polyamine-[polyamine-binding protein]Side 1 = ADP + phosphate + polyamineSide 2 + [polyamine-binding protein]Side 1.. Functionally, part of the ABC transporter complex PotABCD involved in spermidine/putrescine import. Responsible for energy coupling to the transport system. The chain is Spermidine/putrescine import ATP-binding protein PotA from Acidothermus cellulolyticus (strain ATCC 43068 / DSM 8971 / 11B).